A 1888-amino-acid polypeptide reads, in one-letter code: Nuclear pore membrane glycoprotein 210-like (1888 aa).

An N-terminal signal peptide occupies residues 1–35 (MTGCPASSRRRGFGLFFFLRLHRLLLLFLVLRGTL). 7 N-linked (GlcNAc...) asparagine glycosylation sites follow: Asn84, Asn304, Asn348, Asn495, Asn522, Asn812, and Asn931. The region spanning 1082 to 1154 (FPPFRLLPEK…TIQTVNEDTG (73 aa)) is the BIG2 domain. Asn1445 carries N-linked (GlcNAc...) asparagine glycosylation. The chain crosses the membrane as a helical span at residues 1813-1833 (ILLLTLFAVLASTASIFLAYN). A glycan (N-linked (GlcNAc...) asparagine) is linked at Asn1859.

Belongs to the NUP210 family.

The protein resides in the nucleus membrane. The protein is Nuclear pore membrane glycoprotein 210-like (NUP210L) of Homo sapiens (Human).